The chain runs to 437 residues: Phosphoglucosamine mutase (437 aa).

Catalysis depends on S93, which acts as the Phosphoserine intermediate. 4 residues coordinate Mg(2+): S93, D230, D232, and D234. At S93 the chain carries Phosphoserine.

It belongs to the phosphohexose mutase family. Requires Mg(2+) as cofactor. In terms of processing, activated by phosphorylation.

It carries out the reaction alpha-D-glucosamine 1-phosphate = D-glucosamine 6-phosphate. Catalyzes the conversion of glucosamine-6-phosphate to glucosamine-1-phosphate. The chain is Phosphoglucosamine mutase from Clavibacter michiganensis subsp. michiganensis (strain NCPPB 382).